Reading from the N-terminus, the 176-residue chain is NADH-quinone oxidoreductase subunit I (176 aa).

4Fe-4S ferredoxin-type domains are found at residues 47–77 (LTRDPDGEERCVACHLCSAACPVDCISMQAA) and 87–116 (AWFRINFSRCIFCGLCTEACPTLALQMTSE). [4Fe-4S] cluster contacts are provided by cysteine 57, cysteine 60, cysteine 63, cysteine 67, cysteine 96, cysteine 99, cysteine 102, and cysteine 106.

The protein belongs to the complex I 23 kDa subunit family. In terms of assembly, NDH-1 is composed of 14 different subunits. Subunits NuoA, H, J, K, L, M, N constitute the membrane sector of the complex. [4Fe-4S] cluster serves as cofactor.

It is found in the cell inner membrane. It carries out the reaction a quinone + NADH + 5 H(+)(in) = a quinol + NAD(+) + 4 H(+)(out). Functionally, NDH-1 shuttles electrons from NADH, via FMN and iron-sulfur (Fe-S) centers, to quinones in the respiratory chain. The immediate electron acceptor for the enzyme in this species is believed to be ubiquinone. Couples the redox reaction to proton translocation (for every two electrons transferred, four hydrogen ions are translocated across the cytoplasmic membrane), and thus conserves the redox energy in a proton gradient. The protein is NADH-quinone oxidoreductase subunit I of Syntrophotalea carbinolica (strain DSM 2380 / NBRC 103641 / GraBd1) (Pelobacter carbinolicus).